Here is a 236-residue protein sequence, read N- to C-terminus: 2-C-methyl-D-erythritol 4-phosphate cytidylyltransferase (236 aa).

This sequence belongs to the IspD/TarI cytidylyltransferase family. IspD subfamily.

It carries out the reaction 2-C-methyl-D-erythritol 4-phosphate + CTP + H(+) = 4-CDP-2-C-methyl-D-erythritol + diphosphate. It participates in isoprenoid biosynthesis; isopentenyl diphosphate biosynthesis via DXP pathway; isopentenyl diphosphate from 1-deoxy-D-xylulose 5-phosphate: step 2/6. Catalyzes the formation of 4-diphosphocytidyl-2-C-methyl-D-erythritol from CTP and 2-C-methyl-D-erythritol 4-phosphate (MEP). The polypeptide is 2-C-methyl-D-erythritol 4-phosphate cytidylyltransferase (Burkholderia cenocepacia (strain ATCC BAA-245 / DSM 16553 / LMG 16656 / NCTC 13227 / J2315 / CF5610) (Burkholderia cepacia (strain J2315))).